The primary structure comprises 155 residues: Small ribosomal subunit protein mS86 (155 aa).

Residues 1-27 (MHYMGLFSRAGNIFRQPRALQASNAML) constitute a mitochondrion transit peptide. An RRM domain is found at 36 to 114 (SKIFVGGLSP…RIIGVHPADS (79 aa)).

The protein belongs to the GR-RBP family. As to quaternary structure, component of the mitochondrial ribosome small subunit.

Its subcellular location is the mitochondrion. Its function is as follows. Possibly has a role in RNA transcription or processing during stress. This Arabidopsis thaliana (Mouse-ear cress) protein is Small ribosomal subunit protein mS86 (RBG6).